Here is a 424-residue protein sequence, read N- to C-terminus: Gamma-glutamyl phosphate reductase (424 aa).

The protein belongs to the gamma-glutamyl phosphate reductase family.

It localises to the cytoplasm. It carries out the reaction L-glutamate 5-semialdehyde + phosphate + NADP(+) = L-glutamyl 5-phosphate + NADPH + H(+). It participates in amino-acid biosynthesis; L-proline biosynthesis; L-glutamate 5-semialdehyde from L-glutamate: step 2/2. Catalyzes the NADPH-dependent reduction of L-glutamate 5-phosphate into L-glutamate 5-semialdehyde and phosphate. The product spontaneously undergoes cyclization to form 1-pyrroline-5-carboxylate. The protein is Gamma-glutamyl phosphate reductase of Shewanella woodyi (strain ATCC 51908 / MS32).